We begin with the raw amino-acid sequence, 565 residues long: Membrane protein insertase YidC (565 aa).

Helical transmembrane passes span 6–26 (VLLIFSWLTVATLLWMDWGKN), 348–368 (LMALIGQGLFWILSHLNSLLH), 370–390 (WGWAIVGLVVLLRIAMYPLSA), 437–457 (GGCFPILIQMPIFFALYWVLV), 479–499 (PYFILPLLNIVIMWATQKLTP), and 516–536 (PLIFGVMMAFVPSGLALYWVI).

The protein belongs to the OXA1/ALB3/YidC family. Type 1 subfamily. As to quaternary structure, interacts with the Sec translocase complex via SecD. Specifically interacts with transmembrane segments of nascent integral membrane proteins during membrane integration.

It localises to the cell inner membrane. Functionally, required for the insertion and/or proper folding and/or complex formation of integral membrane proteins into the membrane. Involved in integration of membrane proteins that insert both dependently and independently of the Sec translocase complex, as well as at least some lipoproteins. Aids folding of multispanning membrane proteins. The chain is Membrane protein insertase YidC from Xylella fastidiosa (strain 9a5c).